Reading from the N-terminus, the 263-residue chain is 3-deoxy-manno-octulosonate cytidylyltransferase 1 (263 aa).

The protein belongs to the KdsB family.

The protein resides in the cytoplasm. It carries out the reaction 3-deoxy-alpha-D-manno-oct-2-ulosonate + CTP = CMP-3-deoxy-beta-D-manno-octulosonate + diphosphate. Its pathway is nucleotide-sugar biosynthesis; CMP-3-deoxy-D-manno-octulosonate biosynthesis; CMP-3-deoxy-D-manno-octulosonate from 3-deoxy-D-manno-octulosonate and CTP: step 1/1. It participates in bacterial outer membrane biogenesis; lipopolysaccharide biosynthesis. In terms of biological role, activates KDO (a required 8-carbon sugar) for incorporation into bacterial lipopolysaccharide in Gram-negative bacteria. This chain is 3-deoxy-manno-octulosonate cytidylyltransferase 1, found in Burkholderia ambifaria (strain ATCC BAA-244 / DSM 16087 / CCUG 44356 / LMG 19182 / AMMD) (Burkholderia cepacia (strain AMMD)).